Reading from the N-terminus, the 291-residue chain is Pyridoxal 5'-phosphate synthase subunit PdxS (291 aa).

Aspartate 23 contacts D-ribose 5-phosphate. Catalysis depends on lysine 80, which acts as the Schiff-base intermediate with D-ribose 5-phosphate. Glycine 152 lines the D-ribose 5-phosphate pocket. Arginine 164 provides a ligand contact to D-glyceraldehyde 3-phosphate. Residues glycine 213 and 234–235 each bind D-ribose 5-phosphate; that span reads GS.

It belongs to the PdxS/SNZ family. In terms of assembly, in the presence of PdxT, forms a dodecamer of heterodimers.

It carries out the reaction aldehydo-D-ribose 5-phosphate + D-glyceraldehyde 3-phosphate + L-glutamine = pyridoxal 5'-phosphate + L-glutamate + phosphate + 3 H2O + H(+). It participates in cofactor biosynthesis; pyridoxal 5'-phosphate biosynthesis. Catalyzes the formation of pyridoxal 5'-phosphate from ribose 5-phosphate (RBP), glyceraldehyde 3-phosphate (G3P) and ammonia. The ammonia is provided by the PdxT subunit. Can also use ribulose 5-phosphate and dihydroxyacetone phosphate as substrates, resulting from enzyme-catalyzed isomerization of RBP and G3P, respectively. This is Pyridoxal 5'-phosphate synthase subunit PdxS from Desulfitobacterium hafniense (strain DSM 10664 / DCB-2).